We begin with the raw amino-acid sequence, 449 residues long: SWI/SNF chromatin-remodeling accessory subunit 2 (449 aa).

The segment covering 1 to 11 (MHSQQRPNPQM) has biased composition (polar residues). Residues 1–56 (MHSQQRPNPQMNRHPYGTPGSAPQMRRPGGFAGQPPQMHGPRMVAPPAAPLPKKKK) form a disordered region. In terms of domain architecture, SWIB/MDM2 spans 223-300 (NHPAKFKLHP…PNKLHQLLQQ (78 aa)).

It belongs to the SMARCD family. Component of the multiprotein chromatin-remodeling complexes SWI/SNF: SWI/SNF-A (BAF), SWI/SNF-B (PBAF) and related complexes. The canonical complex contains a catalytic subunit swsn-4, core subunits swsn-1 and swsn-5, and accessory subunits swsn-3, swsn-6, phf-10, dpff-1, swsn-9 and either ham-3/swsn-2.1 or swsn-2.2.

It is found in the nucleus. The protein resides in the nucleoplasm. It localises to the chromosome. Its subcellular location is the nucleus envelope. Its function is as follows. Involved in transcriptional activation and repression of select genes by chromatin remodeling (alteration of DNA-nucleosome topology). Component of SWI/SNF chromatin remodeling complexes that carry out key enzymatic activities, changing chromatin structure by altering DNA-histone contacts within a nucleosome in an ATP-dependent manner. Probably regulates vulva development through the let-60/Ras pathway. Involved in nuclear reassembly after mitosis and recruitment of nuclear envelope protein, mel-28, to the nuclear periphery in the early embryo and in the adult germline. Involved in gonadogenesis. The sequence is that of SWI/SNF chromatin-remodeling accessory subunit 2 from Caenorhabditis elegans.